A 339-amino-acid chain; its full sequence is Mycothiol acetyltransferase (339 aa).

2 N-acetyltransferase domains span residues 8 to 174 and 176 to 339; these read YEQL…QGLT and LTYP…GELN. Glu-39 lines the 1D-myo-inositol 2-(L-cysteinylamino)-2-deoxy-alpha-D-glucopyranoside pocket. Residue 85–87 participates in acetyl-CoA binding; that stretch reads LAV. 1D-myo-inositol 2-(L-cysteinylamino)-2-deoxy-alpha-D-glucopyranoside contacts are provided by Glu-207, Lys-254, and Glu-270. Residue 274–276 coordinates acetyl-CoA; the sequence is VCL. Tyr-308 contacts 1D-myo-inositol 2-(L-cysteinylamino)-2-deoxy-alpha-D-glucopyranoside.

This sequence belongs to the acetyltransferase family. MshD subfamily. Monomer.

The enzyme catalyses 1D-myo-inositol 2-(L-cysteinylamino)-2-deoxy-alpha-D-glucopyranoside + acetyl-CoA = mycothiol + CoA + H(+). In terms of biological role, catalyzes the transfer of acetyl from acetyl-CoA to desacetylmycothiol (Cys-GlcN-Ins) to form mycothiol. The protein is Mycothiol acetyltransferase of Corynebacterium urealyticum (strain ATCC 43042 / DSM 7109).